A 647-amino-acid polypeptide reads, in one-letter code: Putative lipase YDL109C (647 aa).

Residue Ser-274 is the Charge relay system of the active site. The interval 502 to 523 (PPPSPTLYEGTAAKEGETRKTR) is disordered. Basic and acidic residues predominate over residues 513–523 (AAKEGETRKTR).

Belongs to the putative lipase ROG1 family.

Functionally, involved in lipid metabolism. The sequence is that of Putative lipase YDL109C from Saccharomyces cerevisiae (strain ATCC 204508 / S288c) (Baker's yeast).